The primary structure comprises 283 residues: NAD kinase (283 aa).

The active-site Proton acceptor is Asp-67. Residues 67-68, 141-142, Arg-152, Asp-171, 182-187, and Gln-241 each bind NAD(+); these read DG, ND, and TAYSLS.

It belongs to the NAD kinase family. The cofactor is a divalent metal cation.

The protein localises to the cytoplasm. The catalysed reaction is NAD(+) + ATP = ADP + NADP(+) + H(+). Functionally, involved in the regulation of the intracellular balance of NAD and NADP, and is a key enzyme in the biosynthesis of NADP. Catalyzes specifically the phosphorylation on 2'-hydroxyl of the adenosine moiety of NAD to yield NADP. This chain is NAD kinase, found in Heliobacterium modesticaldum (strain ATCC 51547 / Ice1).